A 72-amino-acid polypeptide reads, in one-letter code: Crustacean hyperglycemic hormone (72 aa).

Pyrrolidone carboxylic acid; partial is present on Q1. 3 disulfides stabilise this stretch: C7-C43, C23-C39, and C26-C52. V72 is subject to Valine amide.

This sequence belongs to the arthropod CHH/MIH/GIH/VIH hormone family. The N-terminus forms pyrrolidone carboxylic acid in isoform CHH-II and is free in isoform CHH-I. In terms of tissue distribution, produced by the medulla terminalis X-organ in the eyestalks and transported to the sinus gland where they are stored and released.

The protein localises to the secreted. Hormone found in the sinus gland of isopods and decapods which controls the blood sugar level. Has a secretagogue action over the amylase released from the midgut gland. May act as a stress hormone and may be involved in the control of molting and reproduction. The protein is Crustacean hyperglycemic hormone of Cancer pagurus (Rock crab).